Consider the following 1645-residue polypeptide: Histone-lysine N-methyltransferase set-26 (1645 aa).

Disordered stretches follow at residues methionine 1–proline 82, glutamate 109–glutamate 132, aspartate 200–proline 228, threonine 417–proline 606, and threonine 651–alanine 789. Low complexity-rich tracts occupy residues glutamate 16–isoleucine 31 and glutamine 67–proline 82. A compositionally biased stretch (polar residues) spans proline 207–proline 228. Composition is skewed to low complexity over residues arginine 429 to arginine 443 and arginine 453 to alanine 467. Residues methionine 559–proline 578 show a composition bias toward basic and acidic residues. Pro residues predominate over residues proline 592–valine 603. Positions threonine 651 to tyrosine 675 are enriched in polar residues. Composition is skewed to basic residues over residues glutamine 684–serine 699 and histidine 731–arginine 741. Residues serine 780–alanine 789 are compositionally biased toward acidic residues. The PHD-type zinc-finger motif lies at threonine 794–arginine 842. The segment at alanine 865–valine 904 is disordered. The segment covering lysine 881 to proline 899 has biased composition (polar residues). Residues methionine 973–aspartate 1064 form the SET domain. Over residues arginine 1099–valine 1172 the composition is skewed to basic and acidic residues. Disordered regions lie at residues arginine 1099–valine 1333, serine 1371–glycine 1536, and proline 1548–asparagine 1645. The stretch at methionine 1103–serine 1217 forms a coiled coil. The segment covering glutamate 1173–serine 1183 has biased composition (low complexity). The segment covering alanine 1188–arginine 1210 has biased composition (basic and acidic residues). Composition is skewed to polar residues over residues threonine 1258–threonine 1268 and threonine 1300–asparagine 1311. Composition is skewed to basic and acidic residues over residues serine 1382–asparagine 1427, lysine 1434–proline 1450, and lysine 1468–serine 1485. Residues serine 1554–alanine 1565 are compositionally biased toward polar residues.

It belongs to the class V-like SAM-binding methyltransferase superfamily. As to expression, expressed both in the germline and in somatic tissues.

It localises to the nucleus. It catalyses the reaction L-lysyl(9)-[histone H3] + 3 S-adenosyl-L-methionine = N(6),N(6),N(6)-trimethyl-L-lysyl(9)-[histone H3] + 3 S-adenosyl-L-homocysteine + 3 H(+). In terms of biological role, histone methyltransferase that mediates trimethylation of 'Lys-9' of histone H3 in vitro. Involved in transcriptional regulation. Plays a role in the negative regulation of lifespan and in heat resistance. Together with set-9, negatively regulates lifespan in a germline-independent, partially daf-16-dependent fashion. Together with set-9, plays a role in germline development and maintenance and might play a role in the restriction of the trimethylation mark on histone H3 'Lys-4'(H3K4me3) to target genes specifically in the germline. Together with spr-5, required for transgenerational fertility. In Caenorhabditis elegans, this protein is Histone-lysine N-methyltransferase set-26.